The sequence spans 115 residues: Large ribosomal subunit protein bL20 (115 aa).

It belongs to the bacterial ribosomal protein bL20 family.

Functionally, binds directly to 23S ribosomal RNA and is necessary for the in vitro assembly process of the 50S ribosomal subunit. It is not involved in the protein synthesizing functions of that subunit. This is Large ribosomal subunit protein bL20 from Cytophaga hutchinsonii (strain ATCC 33406 / DSM 1761 / CIP 103989 / NBRC 15051 / NCIMB 9469 / D465).